Here is a 130-residue protein sequence, read N- to C-terminus: UPF0251 protein Mevan_1492 (130 aa).

The protein belongs to the UPF0251 family.

The polypeptide is UPF0251 protein Mevan_1492 (Methanococcus vannielii (strain ATCC 35089 / DSM 1224 / JCM 13029 / OCM 148 / SB)).